Reading from the N-terminus, the 456-residue chain is Exodeoxyribonuclease 7 large subunit (456 aa).

The protein belongs to the XseA family. Heterooligomer composed of large and small subunits.

Its subcellular location is the cytoplasm. It catalyses the reaction Exonucleolytic cleavage in either 5'- to 3'- or 3'- to 5'-direction to yield nucleoside 5'-phosphates.. Functionally, bidirectionally degrades single-stranded DNA into large acid-insoluble oligonucleotides, which are then degraded further into small acid-soluble oligonucleotides. The chain is Exodeoxyribonuclease 7 large subunit from Lactobacillus delbrueckii subsp. bulgaricus (strain ATCC 11842 / DSM 20081 / BCRC 10696 / JCM 1002 / NBRC 13953 / NCIMB 11778 / NCTC 12712 / WDCM 00102 / Lb 14).